We begin with the raw amino-acid sequence, 510 residues long: MVPWVEKYRPRSLKELVNQDEAKKELAAWANEWARGSIPEPRAVLLHGPPGTGKTSAAYALAHDFGWDVIELNASDKRTRNVIEKIVGGASTSRSLLRMTREAGGDYEHVEGHSDRVLVLVDEVDGIDPREDRGGVTALTRAVRQARNPMVLVANDPWVLPKSLRDAVRMIEFRRLRVNDIVEALRRICEREGIEYEEVALRRIAKRARGDLRAAINDLEALARPTGRVTSDDVEALGWRDKEITIFEALGRIFNKPPRQARRALWNLDEDPDDVILWIAQNIPRAYRDPEEIARAYDYLSKADVFSSRAIETGDWRFKYVYATDLMTSGVAAARKGKPPGFVRFQPPKILRKLGTTRKEREVRNSIAKKIAERMHVSTRRAKMDVISVLEIAFRKVADNPTDRGLEILGGIAGYLELSKREIGFLCGDPQVAQRVYQRALRVREKLRKIRRERVKGAMESMLERKREESEVEEEAKEIEEAVEKAEEEEEREEKKKEGGGEQRTLDAFF.

48–55 (GPPGTGKT) is a binding site for ATP. The segment at 459–510 (MESMLERKREESEVEEEAKEIEEAVEKAEEEEEREEKKKEGGGEQRTLDAFF) is disordered. A compositionally biased stretch (basic and acidic residues) spans 493-510 (EEKKKEGGGEQRTLDAFF).

It belongs to the activator 1 small subunits family. RfcL subfamily. As to quaternary structure, heteromultimer composed of small subunits (RfcS) and large subunits (RfcL).

In terms of biological role, part of the RFC clamp loader complex which loads the PCNA sliding clamp onto DNA. The sequence is that of Replication factor C large subunit from Methanopyrus kandleri (strain AV19 / DSM 6324 / JCM 9639 / NBRC 100938).